A 172-amino-acid chain; its full sequence is Peptidyl-prolyl cis-trans isomerase (172 aa).

A PPIase cyclophilin-type domain is found at 7–170 (FFDMTVGGAP…KVVKVADCGQ (164 aa)).

It belongs to the cyclophilin-type PPIase family.

The protein resides in the cytoplasm. It catalyses the reaction [protein]-peptidylproline (omega=180) = [protein]-peptidylproline (omega=0). Its activity is regulated as follows. Binds cyclosporin A (CsA). CsA mediates some of its effects via an inhibitory action on PPIase. In terms of biological role, PPIases accelerate the folding of proteins. It catalyzes the cis-trans isomerization of proline imidic peptide bonds in oligopeptides. This Zea mays (Maize) protein is Peptidyl-prolyl cis-trans isomerase (CYP).